A 189-amino-acid polypeptide reads, in one-letter code: MTGKLIWLVGPSGSGKDSLLEALRKQEHPQMLVAHRYITRPAGAGCENHVALSEHEFFTRAAQHLFALSWHANNLYYGVGMEIDLWLHAGLDVVVNGSRAHLPQAKARYGESLLPVCLQVSPDILRQRLEQRGRENALEIAQRLERAARYTPQQCVMLNNDGSLLQSVEMFLHLIRTHGNHKESQHACL.

Position 10–17 (10–17) interacts with ATP; that stretch reads GPSGSGKD.

The protein belongs to the ribose 1,5-bisphosphokinase family.

The catalysed reaction is alpha-D-ribose 1,5-bisphosphate + ATP = 5-phospho-alpha-D-ribose 1-diphosphate + ADP. Its pathway is metabolic intermediate biosynthesis; 5-phospho-alpha-D-ribose 1-diphosphate biosynthesis; 5-phospho-alpha-D-ribose 1-diphosphate from D-ribose 5-phosphate (route II): step 3/3. In terms of biological role, catalyzes the phosphorylation of ribose 1,5-bisphosphate to 5-phospho-D-ribosyl alpha-1-diphosphate (PRPP). The chain is Ribose 1,5-bisphosphate phosphokinase PhnN from Enterobacter lignolyticus (strain SCF1).